The chain runs to 151 residues: Putative pre-16S rRNA nuclease (151 aa).

Belongs to the YqgF nuclease family.

It is found in the cytoplasm. Could be a nuclease involved in processing of the 5'-end of pre-16S rRNA. The protein is Putative pre-16S rRNA nuclease of Onion yellows phytoplasma (strain OY-M).